Here is a 238-residue protein sequence, read N- to C-terminus: Purine nucleoside phosphorylase DeoD-type (238 aa).

Histidine 4 provides a ligand contact to a purine D-ribonucleoside. Residues glycine 20, arginine 24, arginine 43, and 87-90 (RVGS) each bind phosphate. Residues 179-181 (EME) and 203-204 (SD) contribute to the a purine D-ribonucleoside site. Residue aspartate 204 is the Proton donor of the active site.

It belongs to the PNP/UDP phosphorylase family. In terms of assembly, homohexamer; trimer of homodimers.

The enzyme catalyses a purine D-ribonucleoside + phosphate = a purine nucleobase + alpha-D-ribose 1-phosphate. The catalysed reaction is a purine 2'-deoxy-D-ribonucleoside + phosphate = a purine nucleobase + 2-deoxy-alpha-D-ribose 1-phosphate. In terms of biological role, catalyzes the reversible phosphorolytic breakdown of the N-glycosidic bond in the beta-(deoxy)ribonucleoside molecules, with the formation of the corresponding free purine bases and pentose-1-phosphate. This Haemophilus influenzae (strain PittEE) protein is Purine nucleoside phosphorylase DeoD-type.